The sequence spans 149 residues: Large ribosomal subunit protein uL13 (149 aa).

Belongs to the universal ribosomal protein uL13 family. In terms of assembly, part of the 50S ribosomal subunit.

Functionally, this protein is one of the early assembly proteins of the 50S ribosomal subunit, although it is not seen to bind rRNA by itself. It is important during the early stages of 50S assembly. The chain is Large ribosomal subunit protein uL13 from Bifidobacterium longum (strain DJO10A).